Consider the following 425-residue polypeptide: Voltage-dependent calcium channel gamma-8 subunit (425 aa).

The next 4 helical transmembrane spans lie at 19–39 (VQVL…TIAI), 129–149 (SIFP…VAAS), 158–178 (IILG…IGVI), and 208–228 (FGGL…NIYI). Phosphoserine is present on residues Ser252 and Ser255. The disordered stretch occupies residues 272 to 304 (RRSRSSSRSSEPSPSRDASPGGPGGPGFASTDI). Low complexity predominate over residues 277-287 (SSRSSEPSPSR). A helical membrane pass occupies residues 318-338 (VAAGLAGAGGGGGGAVGAFGG). Residues 343-354 (AGGGGGGGGGAG) show a composition bias toward gly residues. Disordered regions lie at residues 343 to 365 (AGGG…ASGF) and 377 to 425 (GGGV…TTPV). A compositionally biased stretch (pro residues) spans 387–401 (PPAPPAPAPPAPSAP). Residues 412–425 (ASNTNTLNRKTTPV) show a composition bias toward polar residues.

Belongs to the PMP-22/EMP/MP20 family. CACNG subfamily. Interacts with CACNA1C. Identified in a complex with the L-type calcium channel subunits CACNA1C, CACNA2D1 and either CACNB1 or CACNB2. Acts as an auxiliary subunit for AMPA-selective glutamate receptors (AMPARs). Found in a complex with GRIA1, GRIA2, GRIA3, GRIA4, CNIH2, CNIH3, CACNG2, CACNG3, CACNG4, CACNG5 and CACNG7. Interacts with CNIH2. Found in a complex with GRIA1, GRIA2, GRIA3, GRIA4, DLG4 and CNIH2. Palmitoylated. Probably palmitoylated by ZDHHC3 and ZDHHC7. In terms of tissue distribution, detected in heart left ventricle.

It is found in the cell membrane. Its subcellular location is the postsynaptic density membrane. In terms of biological role, regulates the activity of L-type calcium channels that contain CACNA1C as pore-forming subunit. Regulates the trafficking and gating properties of AMPA-selective glutamate receptors (AMPARs). Promotes their targeting to the cell membrane and synapses and modulates their gating properties by slowing their rates of activation, deactivation and desensitization and by mediating their resensitization. Does not show subunit-specific AMPA receptor regulation and regulates all AMPAR subunits. The protein is Voltage-dependent calcium channel gamma-8 subunit of Homo sapiens (Human).